The primary structure comprises 51 residues: Sperm protamine P1 (51 aa).

It belongs to the protamine P1 family. In terms of assembly, cross-linked by interchain disulfide bonds around the DNA-helix. Testis.

It is found in the nucleus. The protein resides in the chromosome. Its function is as follows. Protamines substitute for histones in the chromatin of sperm during the haploid phase of spermatogenesis. They compact sperm DNA into a highly condensed, stable and inactive complex. The chain is Sperm protamine P1 (PRM1) from Hylobates lar (Lar gibbon).